The following is a 428-amino-acid chain: MKILIVGSGGREHALAWKAAQSPQVEQVFVAPGNGGTASEPGVENVAIAADDIAGLVEFARRESIGLTIVGPEAPLVLGLVDAFAEAGLPCFGPRQASAQLEGSKAFAKDFLHRHGIPTAAYGVFTELEPALAYLRQVGAPVVVKADGLAAGKGVILADDLATAEAAVHDMLGGGRFGRAGARVVIEEFLTGEEASFIAMVDGRHILPLASSQDHKARDDGDRGPNTGGMGAYSPAPIVTPEIHDRIMREVMEPTVAGLAAEGLPYLGFLYAGLMIGADGTPKVLEFNCRLGDPETQPLLMRLQSDLVELCLAALDGRLDQVTADWDARPALGVVMAAGGYPDDYETGHVISGLDAVPSSEAKVFQAGTRCEGDAILTNGGRVLCVTALGANVAEAQHLAYQAVDRIQWTDAFCRRDIGHRAIARERS.

The 208-residue stretch at 109–316 (KDFLHRHGIP…LVELCLAALD (208 aa)) folds into the ATP-grasp domain. An ATP-binding site is contributed by 135-196 (LRQVGAPVVV…EEFLTGEEAS (62 aa)). Residues 211-235 (SSQDHKARDDGDRGPNTGGMGAYSP) are disordered. Residues 213–223 (QDHKARDDGDR) show a composition bias toward basic and acidic residues. Positions 286 and 288 each coordinate Mg(2+).

Belongs to the GARS family. Requires Mg(2+) as cofactor. It depends on Mn(2+) as a cofactor.

It catalyses the reaction 5-phospho-beta-D-ribosylamine + glycine + ATP = N(1)-(5-phospho-beta-D-ribosyl)glycinamide + ADP + phosphate + H(+). Its pathway is purine metabolism; IMP biosynthesis via de novo pathway; N(1)-(5-phospho-D-ribosyl)glycinamide from 5-phospho-alpha-D-ribose 1-diphosphate: step 2/2. This chain is Phosphoribosylamine--glycine ligase (purD), found in Allochromatium vinosum (strain ATCC 17899 / DSM 180 / NBRC 103801 / NCIMB 10441 / D) (Chromatium vinosum).